Reading from the N-terminus, the 316-residue chain is BTB/POZ domain-containing adapter for CUL3-mediated RhoA degradation protein 2 (316 aa).

Positions 28–96 constitute a BTB domain; it reads KYVQLNVGGS…LRDDTITLPQ (69 aa). Residues 268–279 show a composition bias toward polar residues; it reads EATSRSRSQASP. A disordered region spans residues 268–287; it reads EATSRSRSQASPSEDEETFE. S278 is subject to Phosphoserine. Residue S280 is modified to Phosphoserine; by CK2.

This sequence belongs to the BACURD family. As to quaternary structure, component of the BCR(TNFAIP1) E3 ubiquitin ligase complex, at least composed of CUL3, TNFAIP1/BACURD2 and RBX1. Interacts with RHOA; with a preference for RhoA-GDP. Interacts with RHOB. Interacts with PCNA. Interacts with CSNK2B. In terms of processing, phosphorylation at Ser-280 by CK2 facilitates the nucleus localization and increases interaction with PCNA.

Its subcellular location is the cytoplasm. The protein localises to the nucleus. It is found in the endosome. Its pathway is protein modification; protein ubiquitination. Functionally, substrate-specific adapter of a BCR (BTB-CUL3-RBX1) E3 ubiquitin-protein ligase complex involved in regulation of cytoskeleton structure. The BCR(TNFAIP1) E3 ubiquitin ligase complex mediates the ubiquitination of RHOA, leading to its degradation by the proteasome, thereby regulating the actin cytoskeleton and cell migration. Its interaction with RHOB may regulate apoptosis. May enhance the PCNA-dependent DNA polymerase delta activity. This Homo sapiens (Human) protein is BTB/POZ domain-containing adapter for CUL3-mediated RhoA degradation protein 2 (TNFAIP1).